The primary structure comprises 206 residues: Homoserine/homoserine lactone efflux protein (206 aa).

6 consecutive transmembrane segments (helical) span residues 5-25 (WWFA…SGAI), 45-65 (GLQT…GTLF), 68-88 (SLLA…WLGI), 117-137 (FVNL…PQFI), 148-168 (LILG…YATL), and 182-202 (MKAL…LLAS).

Belongs to the Rht family.

Its subcellular location is the cell membrane. Conducts the efflux of homoserine and homoserine lactone. This is Homoserine/homoserine lactone efflux protein (rhtB) from Salmonella typhimurium (strain LT2 / SGSC1412 / ATCC 700720).